The following is a 177-amino-acid chain: Large ribosomal subunit protein uL6 (177 aa).

It belongs to the universal ribosomal protein uL6 family. In terms of assembly, part of the 50S ribosomal subunit.

This protein binds to the 23S rRNA, and is important in its secondary structure. It is located near the subunit interface in the base of the L7/L12 stalk, and near the tRNA binding site of the peptidyltransferase center. The protein is Large ribosomal subunit protein uL6 of Colwellia psychrerythraea (strain 34H / ATCC BAA-681) (Vibrio psychroerythus).